A 487-amino-acid chain; its full sequence is Acetyl-coenzyme A carboxylase carboxyl transferase subunit beta, chloroplastic (487 aa).

Residues L223–K487 enclose the CoA carboxyltransferase N-terminal domain. Residues C227, C230, C243, and C246 each coordinate Zn(2+). A C4-type zinc finger spans residues C227 to C246.

The protein belongs to the AccD/PCCB family. Acetyl-CoA carboxylase is a heterohexamer composed of biotin carboxyl carrier protein, biotin carboxylase and 2 subunits each of ACCase subunit alpha and ACCase plastid-coded subunit beta (accD). Zn(2+) is required as a cofactor.

It is found in the plastid. The protein localises to the chloroplast stroma. The catalysed reaction is N(6)-carboxybiotinyl-L-lysyl-[protein] + acetyl-CoA = N(6)-biotinyl-L-lysyl-[protein] + malonyl-CoA. It participates in lipid metabolism; malonyl-CoA biosynthesis; malonyl-CoA from acetyl-CoA: step 1/1. Component of the acetyl coenzyme A carboxylase (ACC) complex. Biotin carboxylase (BC) catalyzes the carboxylation of biotin on its carrier protein (BCCP) and then the CO(2) group is transferred by the transcarboxylase to acetyl-CoA to form malonyl-CoA. The protein is Acetyl-coenzyme A carboxylase carboxyl transferase subunit beta, chloroplastic of Lepidium virginicum (Virginia pepperweed).